Here is a 587-residue protein sequence, read N- to C-terminus: FAD-dependent monooxygenase ankC (587 aa).

Residues 7–27 (AVDVLIIGAGPAGLIAAMWMA) traverse the membrane as a helical segment. The FAD site is built by Y245 and D311.

The protein belongs to the PheA/TfdB FAD monooxygenase family. In terms of assembly, homodimer. Requires FAD as cofactor.

The protein resides in the membrane. It catalyses the reaction cyclo(L-arginyl-L-dehydrotyrosyl) + AH2 + O2 = cyclo(L-arginyl-(Z)-dehydro-3,4-dihydroxytyrosyl) + A + H2O. It participates in secondary metabolite biosynthesis. Functionally, FAD-dependent monooxygenase; part of the ank cluster that mediates the biosynthesis of NK13650 C, a highly modified cyclo-arginine-tyrosine dipeptide. AnkC uses as substrate the dehydro-cyclodipeptide intermediate generated by the monooxygase ankB and acts as a hydroxylase that installs the m-OH through a canonical flavin-dependent aromatic hydroxylation mechanism. Within the pathway, the cyclodipeptide synthase ankA acts as the scaffold-generating enzyme and is responsible for formation of the cyclo-Arg-Tyr diketopiperazine (cRY) from L-Arg and L-Tyr. The ankA product cRY is desaturated by the cytochrome P450 monooxygenase ankB to yield a dehydro-cyclodipeptide intermediate. The FAD-dependent monooxygenase ankC then installs the m-OH, ankD catalyzes the attachment of L-homoserine, and ankE ligates citrate to the ankD product to yield NK13650 B. The O-methyltransferase ankF is responsible for methylation of the C-17 phenol group of NK13650 B to produce NK13650 D. Amidation of NK13650 D with L-Asp by ankG then leads to the production of NK13650 C, whereas amidation of NK13650 B produces NK13650 A. The protein is FAD-dependent monooxygenase ankC of Aspergillus thermomutatus (Neosartorya pseudofischeri).